Consider the following 201-residue polypeptide: Troponin I (201 aa).

The residue at position 1 (alanine 1) is an N-acetylalanine. Over residues 1-33 (ADKAKAAEEAKKKQDDIDRKKAEVRKRLEEQSL) the composition is skewed to basic and acidic residues. The segment at 1 to 45 (ADKAKAAEEAKKKQDDIDRKKAEVRKRLEEQSLKKQKKGFMTPER) is disordered. The troponin T-interaction stretch occupies residues 108-117 (IESDKYDVEL). An actin-binding region spans residues 135 to 148 (DLRGKFIKPTLKKV). An N6,N6,N6-trimethyllysine mark is found at lysine 142 and lysine 146. Positions 182-201 (EDDKGATEGDGPAAEEVAAE) are disordered.

This sequence belongs to the troponin I family.

In terms of biological role, troponin I is the actomyosin ATPase inhibitory subunit present in the thin filament regulatory complex. In Astacus leptodactylus (Turkish narrow-clawed crayfish), this protein is Troponin I.